The chain runs to 388 residues: Oxytocin receptor (388 aa).

The interval 1–32 (MEGTPAANWSVELDLGSGVPPGEEGNRTAGPP) is disordered. Over 1–38 (MEGTPAANWSVELDLGSGVPPGEEGNRTAGPPQRNEAL) the chain is Extracellular. Residues N8 and N26 are each glycosylated (N-linked (GlcNAc...) asparagine). A helical transmembrane segment spans residues 39-63 (ARVEVAVLCLILFLALSGNACVLLA). Residues 64–74 (LRTTRHKHSRL) lie on the Cytoplasmic side of the membrane. Residues 75–97 (FFFMKHLSIADLVVAVFQVLPQL) traverse the membrane as a helical segment. Over 98–113 (LWDITFRFYGPDLLCR) the chain is Extracellular. A disulfide bridge links C112 with C187. The chain crosses the membrane as a helical span at residues 114–135 (LVKYLQVVGMFASTYLLLLMSL). Over 136–154 (DRCLAICQPLRSLRRRTDR) the chain is Cytoplasmic. Residues 155–175 (LAVLGTWLGCLVASAPQVHIF) traverse the membrane as a helical segment. The Extracellular portion of the chain corresponds to 176–202 (SLREVADGVFDCWAVFIQPWGPKAYVT). A helical membrane pass occupies residues 203–225 (WITLAVYIVPVIVLAACYGLISF). Residues 226-274 (KIWQNLRLKTAAAAAAAEGNDAAGGAGRAALARVSSVKLISKAKIRTVK) are Cytoplasmic-facing. The helical transmembrane segment at 275-293 (MTFIIVLAFIVCWTPFFFV) threads the bilayer. The Extracellular segment spans residues 294-308 (QMWSVWDVNAPKEAS). The chain crosses the membrane as a helical span at residues 309-331 (AFIIAMLLASLNSCCNPWIYMLF). Topologically, residues 332 to 388 (TGHLFHELVQRFFCCSARYLKGSRPGETSVSKKSNSSTFVLSRRSSSQRSCSQPSSA) are cytoplasmic. Positions 354–388 (SRPGETSVSKKSNSSTFVLSRRSSSQRSCSQPSSA) are disordered. A phosphoserine mark is found at S365 and S367. Positions 365-388 (SNSSTFVLSRRSSSQRSCSQPSSA) are enriched in low complexity.

Belongs to the G-protein coupled receptor 1 family. Vasopressin/oxytocin receptor subfamily.

It localises to the cell membrane. Receptor for oxytocin. The activity of this receptor is mediated by G proteins which activate a phosphatidylinositol-calcium second messenger system. The polypeptide is Oxytocin receptor (Oxtr) (Rattus norvegicus (Rat)).